The chain runs to 213 residues: ATP phosphoribosyltransferase (213 aa).

This sequence belongs to the ATP phosphoribosyltransferase family. Short subfamily. In terms of assembly, heteromultimer composed of HisG and HisZ subunits.

It is found in the cytoplasm. The catalysed reaction is 1-(5-phospho-beta-D-ribosyl)-ATP + diphosphate = 5-phospho-alpha-D-ribose 1-diphosphate + ATP. It functions in the pathway amino-acid biosynthesis; L-histidine biosynthesis; L-histidine from 5-phospho-alpha-D-ribose 1-diphosphate: step 1/9. Catalyzes the condensation of ATP and 5-phosphoribose 1-diphosphate to form N'-(5'-phosphoribosyl)-ATP (PR-ATP). Has a crucial role in the pathway because the rate of histidine biosynthesis seems to be controlled primarily by regulation of HisG enzymatic activity. The polypeptide is ATP phosphoribosyltransferase (hisG) (Listeria monocytogenes serovar 1/2a (strain ATCC BAA-679 / EGD-e)).